The chain runs to 291 residues: Small ribosomal subunit biogenesis GTPase RsgA (291 aa).

Residues 63-221 (KNELKRPPVS…IADTPGFSAL (159 aa)) enclose the CP-type G domain. GTP is bound by residues 112–115 (TKKD) and 164–172 (GQSGVGKST). Zn(2+) is bound by residues cysteine 245, cysteine 250, histidine 252, and cysteine 258.

It belongs to the TRAFAC class YlqF/YawG GTPase family. RsgA subfamily. In terms of assembly, monomer. Associates with 30S ribosomal subunit, binds 16S rRNA. Requires Zn(2+) as cofactor.

It is found in the cytoplasm. Functionally, one of several proteins that assist in the late maturation steps of the functional core of the 30S ribosomal subunit. Helps release RbfA from mature subunits. May play a role in the assembly of ribosomal proteins into the subunit. Circularly permuted GTPase that catalyzes slow GTP hydrolysis, GTPase activity is stimulated by the 30S ribosomal subunit. This chain is Small ribosomal subunit biogenesis GTPase RsgA, found in Staphylococcus aureus (strain MRSA252).